The primary structure comprises 204 residues: Hydrophilin YNL190W (204 aa).

A signal peptide spans 1 to 20 (MKFSSVTAITLATVATVATA). Over residues 35–46 (SDGSLTTTTSTH) the composition is skewed to low complexity. Positions 35 to 179 (SDGSLTTTTS…ARKNNAAPGP (145 aa)) are disordered. The segment covering 47-59 (TTHKYGKFNKTSK) has biased composition (basic residues). N-linked (GlcNAc...) asparagine glycans are attached at residues Asn-55, Asn-64, Asn-75, Asn-84, Asn-95, Asn-104, Asn-115, Asn-124, Asn-135, Asn-144, and Asn-155. The segment covering 67–79 (GTHKYGKFNKTSK) has biased composition (basic residues). The span at 87-99 (GTHKYGKFNKTSK) shows a compositional bias: basic residues. Basic residues predominate over residues 107–119 (GTHKYGKFNKTSK). Positions 127 to 139 (GTHKYGKFNKTSK) are enriched in basic residues. Residues 147–156 (GTHKYGKFNK) are compositionally biased toward basic residues. Asn-174 carries the GPI-anchor amidated asparagine lipid modification. Positions 175–204 (AAPGPSNFNSIKLFGVTAGSAAVAGALLLL) are cleaved as a propeptide — removed in mature form.

The protein belongs to the PGA14 family. Post-translationally, the GPI-anchor is attached to the protein in the endoplasmic reticulum and serves to target the protein to the cell surface. There, the glucosamine-inositol phospholipid moiety is cleaved off and the GPI-modified mannoprotein is covalently attached via its lipidless GPI glycan remnant to the 1,6-beta-glucan of the outer cell wall layer.

It localises to the secreted. The protein localises to the cell wall. Its subcellular location is the membrane. Its function is as follows. Hydrophilin which is essential to overcome the simple stress of the desiccation-rehydration process. This is Hydrophilin YNL190W from Saccharomyces cerevisiae (strain ATCC 204508 / S288c) (Baker's yeast).